A 198-amino-acid polypeptide reads, in one-letter code: tRNA (pseudouridine(54)-N(1))-methyltransferase (198 aa).

Residues L130, G153, 176 to 181 (LSPLEL), and C186 each bind S-adenosyl-L-methionine.

It belongs to the methyltransferase superfamily. TrmY family. In terms of assembly, homodimer.

It localises to the cytoplasm. It carries out the reaction pseudouridine(54) in tRNA + S-adenosyl-L-methionine = N(1)-methylpseudouridine(54) in tRNA + S-adenosyl-L-homocysteine + H(+). Specifically catalyzes the N1-methylation of pseudouridine at position 54 (Psi54) in tRNAs. The chain is tRNA (pseudouridine(54)-N(1))-methyltransferase from Methanococcus maripaludis (strain C5 / ATCC BAA-1333).